We begin with the raw amino-acid sequence, 85 residues long: Three-finger toxin MALT0044C (85 aa).

A signal peptide spans 1-21; it reads MKTLLLTLVVVTIVCLDLGNT. Intrachain disulfides connect C24-C45, C38-C63, C67-C78, and C79-C84.

The protein belongs to the three-finger toxin family. Short-chain subfamily. As to expression, expressed by the venom gland.

The protein localises to the secreted. This is Three-finger toxin MALT0044C from Micrurus altirostris (Uruguayan coral snake).